The following is a 226-amino-acid chain: ATP synthase F(0) complex subunit a (226 aa).

The next 6 membrane-spanning stretches (helical) occupy residues 11–31, 68–88, 97–117, 138–158, 164–184, and 194–214; these read APTILGQPATIPIIMFPTLLI, WSLMLMSLITFITMTNLLGLL, QLSMNLAMAIPLWAGTIITGL, IPMLVMIETISLLIQPMALAV, ITAGHLLMHLIGNTMLTLSTI, and VLLMLLTILEIAVALIQAYVF.

Belongs to the ATPase A chain family. As to quaternary structure, component of the ATP synthase complex composed at least of ATP5F1A/subunit alpha, ATP5F1B/subunit beta, ATP5MC1/subunit c (homooctomer), MT-ATP6/subunit a, MT-ATP8/subunit 8, ATP5ME/subunit e, ATP5MF/subunit f, ATP5MG/subunit g, ATP5MK/subunit k, ATP5MJ/subunit j, ATP5F1C/subunit gamma, ATP5F1D/subunit delta, ATP5F1E/subunit epsilon, ATP5PF/subunit F6, ATP5PB/subunit b, ATP5PD/subunit d, ATP5PO/subunit OSCP. ATP synthase complex consists of a soluble F(1) head domain (subunits alpha(3) and beta(3)) - the catalytic core - and a membrane F(0) domain - the membrane proton channel (subunits c, a, 8, e, f, g, k and j). These two domains are linked by a central stalk (subunits gamma, delta, and epsilon) rotating inside the F1 region and a stationary peripheral stalk (subunits F6, b, d, and OSCP). Interacts with DNAJC30; interaction is direct.

It is found in the mitochondrion inner membrane. It carries out the reaction H(+)(in) = H(+)(out). Subunit a, of the mitochondrial membrane ATP synthase complex (F(1)F(0) ATP synthase or Complex V) that produces ATP from ADP in the presence of a proton gradient across the membrane which is generated by electron transport complexes of the respiratory chain. ATP synthase complex consist of a soluble F(1) head domain - the catalytic core - and a membrane F(1) domain - the membrane proton channel. These two domains are linked by a central stalk rotating inside the F(1) region and a stationary peripheral stalk. During catalysis, ATP synthesis in the catalytic domain of F(1) is coupled via a rotary mechanism of the central stalk subunits to proton translocation. With the subunit c (ATP5MC1), forms the proton-conducting channel in the F(0) domain, that contains two crucial half-channels (inlet and outlet) that facilitate proton movement from the mitochondrial intermembrane space (IMS) into the matrix. Protons are taken up via the inlet half-channel and released through the outlet half-channel, following a Grotthuss mechanism. The protein is ATP synthase F(0) complex subunit a of Papio hamadryas (Hamadryas baboon).